Reading from the N-terminus, the 568-residue chain is Sesquiterpene synthase 14 (568 aa).

Mg(2+)-binding residues include D319, D323, D463, and E471. The DDXXD motif motif lies at 319 to 323; the sequence is DDLYD.

Belongs to the terpene synthase family. Tpsa subfamily. It depends on Mg(2+) as a cofactor. Mn(2+) is required as a cofactor. As to expression, mostly expressed in roots, to a lower extent in flowers and, at low levels, in fruits.

It catalyses the reaction (2Z,6Z)-farnesyl diphosphate = (E)-alpha-bisabolene + diphosphate. The catalysed reaction is (2Z,6Z)-farnesyl diphosphate = beta-bisabolene + diphosphate. The enzyme catalyses (2E,6E)-farnesyl diphosphate = beta-bisabolene + diphosphate. It carries out the reaction (2E,6E)-farnesyl diphosphate = (Z)-gamma-bisabolene + diphosphate. It catalyses the reaction (2E,6E)-farnesyl diphosphate = (E)-gamma-bisabolene + diphosphate. The catalysed reaction is (2Z,6Z)-farnesyl diphosphate = (E)-gamma-bisabolene + diphosphate. Its pathway is secondary metabolite biosynthesis; terpenoid biosynthesis. Its function is as follows. Sesquiterpene synthase involved in the biosynthesis of volatile compounds. Mediates the conversion of (2E,6E)-farnesyl diphosphate ((EE)-FPP) into beta-bisabolene, and of (2Z,6Z)-farnesyl diphosphate ((ZZ)-FPP) into alpha-bisabolene, but also smaller amounts of (Z)-gamma-bisabolene, (E)-gamma-bisabolene and nerolidol. This chain is Sesquiterpene synthase 14, found in Solanum lycopersicum (Tomato).